The sequence spans 591 residues: 2-succinyl-5-enolpyruvyl-6-hydroxy-3-cyclohexene-1-carboxylate synthase (591 aa).

It belongs to the TPP enzyme family. MenD subfamily. Homodimer. It depends on Mg(2+) as a cofactor. The cofactor is Mn(2+). Thiamine diphosphate serves as cofactor.

It catalyses the reaction isochorismate + 2-oxoglutarate + H(+) = 5-enolpyruvoyl-6-hydroxy-2-succinyl-cyclohex-3-ene-1-carboxylate + CO2. It participates in quinol/quinone metabolism; 1,4-dihydroxy-2-naphthoate biosynthesis; 1,4-dihydroxy-2-naphthoate from chorismate: step 2/7. It functions in the pathway quinol/quinone metabolism; menaquinone biosynthesis. Its function is as follows. Catalyzes the thiamine diphosphate-dependent decarboxylation of 2-oxoglutarate and the subsequent addition of the resulting succinic semialdehyde-thiamine pyrophosphate anion to isochorismate to yield 2-succinyl-5-enolpyruvyl-6-hydroxy-3-cyclohexene-1-carboxylate (SEPHCHC). This Salinibacter ruber (strain DSM 13855 / M31) protein is 2-succinyl-5-enolpyruvyl-6-hydroxy-3-cyclohexene-1-carboxylate synthase.